A 290-amino-acid chain; its full sequence is UPF0761 membrane protein ASA_4118 (290 aa).

A run of 6 helical transmembrane segments spans residues 48–68 (LLSL…FPVF), 104–124 (NTTA…ISAI), 144–164 (FAMY…SIAI), 182–202 (IGYL…FLLV), 216–236 (AFIG…GFAI), and 250–270 (ALAT…VVLL).

Belongs to the UPF0761 family.

It localises to the cell inner membrane. This is UPF0761 membrane protein ASA_4118 from Aeromonas salmonicida (strain A449).